The following is a 4568-amino-acid chain: Dynein heavy chain, cytoplasmic (4568 aa).

Residues methionine 1–phenylalanine 1826 are stem. Coiled coils occupy residues glutamine 587 to lysine 652, lysine 814 to lysine 844, glutamine 1241 to serine 1274, arginine 1324 to leucine 1340, and valine 1559 to serine 1591. AAA regions lie at residues tyrosine 1827–serine 2049, glutamine 2118–glutamine 2394, glutamate 2498–glycine 2747, and glycine 2842–valine 3111. ATP is bound by residues glycine 1865–threonine 1872, glycine 2163–threonine 2170, glycine 2537–threonine 2544, and glycine 2880–threonine 2887. Coiled coils occupy residues glutamate 3132–glutamate 3229, alanine 3339–tryptophan 3432, and asparagine 3707–alanine 3739. The interval glutamate 3132–tryptophan 3432 is stalk. AAA stretches follow at residues leucine 3496–glutamine 3725 and alanine 3954–alanine 4169. Residues glutamine 4359–arginine 4386 adopt a coiled-coil conformation.

Belongs to the dynein heavy chain family. Consists of at least two heavy chains and a number of intermediate and light chains.

Its subcellular location is the cytoplasm. The protein resides in the cytoskeleton. Functionally, cytoplasmic dynein acts as a motor for the intracellular retrograde motility of vesicles and organelles along microtubules. Dynein has ATPase activity; the force-producing power stroke is thought to occur on release of ADP. May play a role in nuclear migration in hypodermal precursor cells. May be involved in the transport of synaptic vesicle components towards the axon of the DA motor neuron. This function may involve the regulation of dynein by pct-1 and/or cdk-5. Involved in the formation of synapses in the dorsal region during synaptic remodeling of DD motor neurons. Required for anterograde trafficking of dense-core vesicles in the DB motor neuron dendrites. Required for the formation of dendritic branches of PVD sensory neurons. May also play a role in GABAergic synaptic vesicle localization in the ventral nerve cord. May play a role in the pairing of homologous chromosomes during meiosis. In Caenorhabditis elegans, this protein is Dynein heavy chain, cytoplasmic.